The primary structure comprises 130 residues: T-cell receptor beta chain V region A20.2.25 (130 aa).

Positions 1 to 21 (MSCRLLLYVSLCLVETALMNT) are cleaved as a signal peptide. Residues 22 to 112 (KITQSPRYLI…DSAVYFCASS (91 aa)) form a v segment region. Residues Asn36 and Asn75 are each glycosylated (N-linked (GlcNAc...) asparagine). The interval 113–115 (HGE) is d segment. The tract at residues 116–130 (NTEVFFGKGTTLTVV) is j segment.

This is T-cell receptor beta chain V region A20.2.25 from Mus musculus (Mouse).